A 202-amino-acid polypeptide reads, in one-letter code: Small ribosomal subunit protein uS3 (202 aa).

The KH type-2 domain occupies 18 to 87 (LNEYLQRQLV…NPQIDVVEVP (70 aa)).

This sequence belongs to the universal ribosomal protein uS3 family. As to quaternary structure, part of the 30S ribosomal subunit.

Binds the lower part of the 30S subunit head. The sequence is that of Small ribosomal subunit protein uS3 from Thermofilum pendens (strain DSM 2475 / Hrk 5).